Here is a 251-residue protein sequence, read N- to C-terminus: tRNA (guanine-N(7)-)-methyltransferase (251 aa).

S-adenosyl-L-methionine is bound by residues Gly71, 94–95, 128–129, and Leu148; these read EL and NS. Asp151 is a catalytic residue. S-adenosyl-L-methionine is bound at residue 226-228; the sequence is TEE.

The protein belongs to the class I-like SAM-binding methyltransferase superfamily. TrmB family.

It is found in the nucleus. It catalyses the reaction guanosine(46) in tRNA + S-adenosyl-L-methionine = N(7)-methylguanosine(46) in tRNA + S-adenosyl-L-homocysteine. It participates in tRNA modification; N(7)-methylguanine-tRNA biosynthesis. In terms of biological role, catalyzes the formation of N(7)-methylguanine at position 46 (m7G46) in tRNA. This chain is tRNA (guanine-N(7)-)-methyltransferase, found in Arabidopsis thaliana (Mouse-ear cress).